A 332-amino-acid polypeptide reads, in one-letter code: Leucine carboxyl methyltransferase 1 (332 aa).

Residues R71, G96, D120, D169–L170, and E196 each bind S-adenosyl-L-methionine.

It belongs to the methyltransferase superfamily. LCMT family.

The catalysed reaction is [phosphatase 2A protein]-C-terminal L-leucine + S-adenosyl-L-methionine = [phosphatase 2A protein]-C-terminal L-leucine methyl ester + S-adenosyl-L-homocysteine. Functionally, methylates the carboxyl group of the C-terminal leucine residue of protein phosphatase 2A catalytic subunits to form alpha-leucine ester residues. In Rattus norvegicus (Rat), this protein is Leucine carboxyl methyltransferase 1 (Lcmt1).